The chain runs to 232 residues: Pseudaminic acid cytidylyltransferase (232 aa).

The protein belongs to the CMP-NeuNAc synthase family. The cofactor is Mg(2+).

It carries out the reaction pseudaminate + CTP = CMP-pseudaminate + diphosphate. In terms of biological role, catalyzes the final step in the biosynthesis of pseudaminic acid, a sialic-acid-like sugar that is used to modify flagellin. Mediates the activation of pseudaminic acid with CMP by forming CMP-pseudaminic acid. The sequence is that of Pseudaminic acid cytidylyltransferase (pseF) from Campylobacter jejuni subsp. jejuni serotype O:2 (strain ATCC 700819 / NCTC 11168).